The sequence spans 530 residues: Autoinducer-2 kinase (530 aa).

This sequence belongs to the FGGY kinase family.

Its subcellular location is the cytoplasm. The catalysed reaction is (S)-4,5-dihydroxypentane-2,3-dione + ATP = (2S)-2-hydroxy-3,4-dioxopentyl phosphate + ADP + H(+). In terms of biological role, catalyzes the phosphorylation of autoinducer-2 (AI-2) to phospho-AI-2, which subsequently inactivates the transcriptional regulator LsrR and leads to the transcription of the lsr operon. Phosphorylates the ring-open form of (S)-4,5-dihydroxypentane-2,3-dione (DPD), which is the precursor to all AI-2 signaling molecules, at the C5 position. The chain is Autoinducer-2 kinase from Salmonella typhimurium (strain LT2 / SGSC1412 / ATCC 700720).